The primary structure comprises 494 residues: 4-trimethylaminobutyraldehyde dehydrogenase (494 aa).

Position 2 is an N-acetylserine (Ser-2). Lys-30 is subject to N6-acetyllysine; alternate. The residue at position 30 (Lys-30) is an N6-succinyllysine; alternate. Lys-59 is modified (N6-succinyllysine). Residues Lys-180 and 232–236 (GSVPT) contribute to the NAD(+) site. Residue Glu-254 is the Proton acceptor of the active site. The Nucleophile role is filled by Cys-288. Lys-298 carries the N6-acetyllysine modification. The residue at position 303 (Lys-303) is an N6-acetyllysine; alternate. Lys-303 is subject to N6-succinyllysine; alternate. Lys-344 is subject to N6-acetyllysine. Residue Glu-391 coordinates NAD(+).

It belongs to the aldehyde dehydrogenase family. In terms of assembly, homotetramer.

The protein resides in the cytoplasm. It is found in the cytosol. It carries out the reaction 4-(trimethylamino)butanal + NAD(+) + H2O = 4-(trimethylamino)butanoate + NADH + 2 H(+). The enzyme catalyses an aldehyde + NAD(+) + H2O = a carboxylate + NADH + 2 H(+). The catalysed reaction is 4-aminobutanal + NAD(+) + H2O = 4-aminobutanoate + NADH + 2 H(+). It catalyses the reaction formaldehyde + NAD(+) + H2O = formate + NADH + 2 H(+). It carries out the reaction acetaldehyde + NAD(+) + H2O = acetate + NADH + 2 H(+). The enzyme catalyses imidazole-4-acetaldehyde + NAD(+) + H2O = imidazole-4-acetate + NADH + 2 H(+). The catalysed reaction is acrolein + NAD(+) + H2O = acrylate + NADH + 2 H(+). It catalyses the reaction (5-hydroxyindol-3-yl)acetaldehyde + NAD(+) + H2O = (5-hydroxyindol-3-yl)acetate + NADH + 2 H(+). It carries out the reaction 3,4-dihydroxyphenylacetaldehyde + NAD(+) + H2O = 3,4-dihydroxyphenylacetate + NADH + 2 H(+). The enzyme catalyses spermine monoaldehyde + NAD(+) + H2O = N-(2-carboxyethyl)spermidine + NADH + 2 H(+). The catalysed reaction is propanal + NAD(+) + H2O = propanoate + NADH + 2 H(+). It catalyses the reaction butanal + NAD(+) + H2O = butanoate + NADH + 2 H(+). It carries out the reaction pentanal + NAD(+) + H2O = pentanoate + NADH + 2 H(+). The enzyme catalyses hexanal + NAD(+) + H2O = hexanoate + NADH + 2 H(+). The protein operates within amine and polyamine biosynthesis; carnitine biosynthesis. Its function is as follows. Converts gamma-trimethylaminobutyraldehyde into gamma-butyrobetaine with high efficiency (in vitro). Can catalyze the irreversible oxidation of a broad range of aldehydes to the corresponding acids in an NAD-dependent reaction, but with low efficiency. Catalyzes the oxidation of aldehydes arising from biogenic amines and polyamines. This is 4-trimethylaminobutyraldehyde dehydrogenase (ALDH9A1) from Pongo abelii (Sumatran orangutan).